We begin with the raw amino-acid sequence, 182 residues long: Carbonic anhydrase (182 aa).

Residues H64, H81, and H86 each coordinate Mg(2+).

Belongs to the gamma-class carbonic anhydrase family. Homotrimer. The cofactor is Mg(2+). Zn(2+) serves as cofactor.

It carries out the reaction hydrogencarbonate + H(+) = CO2 + H2O. Reversible hydration of carbon dioxide. This Geobacillus kaustophilus (strain HTA426) protein is Carbonic anhydrase.